A 113-amino-acid polypeptide reads, in one-letter code: Endoribonuclease SymE (113 aa).

The SpoVT-AbrB domain occupies 29-74 (SRYPDYSRIPAITLKGQWLEAAGFATGTAIDVKVMEGCIVLTAQPP).

It belongs to the SymE family.

Its subcellular location is the cytoplasm. In terms of biological role, involved in the degradation and recycling of damaged RNA. It is itself a target for degradation by the ATP-dependent protease Lon. This chain is Endoribonuclease SymE, found in Escherichia coli O1:K1 / APEC.